The sequence spans 521 residues: MTQDKILILDFGSQVTQLIARRVREAHVYCELHSFDMPLDEIKAFNPKGIILSGGPNSVYESDYQADIGIFDLGIPVLGICYGMQFMAHHLGGEVTPGNQREFGYAQVKTIDSGLTRDIYDDAPNTLDVWMSHGDKVSKLPDGFAVIGDTPSCPIAMMENAEKQFYGIQFHPEVTHTKQGRALLNRFVLDICGAQPGWTMPNYIEEAVAKIREQVGSDEVILGLSGGVDSSVAAALIHRAIGDQLTCVFVDHGLLRLNEGKMVMDMFARNLGVKVIHVDAEGQFMAKLAGVTDPEKKRKIIGAEFIEVFDAEEKKLTNAKWLAQGTIYPDVIESAGAKTQKAHAIKSHHNVGGLPENMKLKLLEPLRDLFKDEVRELGVALGLPREMVYRHPFPGPGLGVRILGEVKKEYADLLRQADDIFIQELRNTTDENGTSWYDLTSQAFAVFLPVKSVGVMGDGRTYDYVVALRAVITSDFMTAHWAELPYSLLGRVSNRIINEVKGINRVVYDVSGKPPATIEWE.

The Glutamine amidotransferase type-1 domain maps to 5 to 197; sequence KILILDFGSQ…VLDICGAQPG (193 aa). Catalysis depends on Cys81, which acts as the Nucleophile. Active-site residues include His171 and Glu173. Residues 198 to 390 enclose the GMPS ATP-PPase domain; sequence WTMPNYIEEA…LGLPREMVYR (193 aa). Position 225–231 (225–231) interacts with ATP; the sequence is SGGVDSS.

Homodimer.

It carries out the reaction XMP + L-glutamine + ATP + H2O = GMP + L-glutamate + AMP + diphosphate + 2 H(+). Its pathway is purine metabolism; GMP biosynthesis; GMP from XMP (L-Gln route): step 1/1. Functionally, catalyzes the synthesis of GMP from XMP. In Neisseria meningitidis serogroup C (strain 053442), this protein is GMP synthase [glutamine-hydrolyzing].